Here is a 231-residue protein sequence, read N- to C-terminus: Uridylate kinase (231 aa).

An ATP-binding site is contributed by 6–9 (KLSG). An involved in allosteric activation by GTP region spans residues 14–19 (GEGGRG). 2 residues coordinate ATP: Gly-49 and Arg-53. Residues Asp-66 and 127-134 (TSNPFFTT) each bind UMP. ATP is bound by residues Thr-154, Tyr-160, and Asp-163.

Belongs to the UMP kinase family. Homohexamer.

It localises to the cytoplasm. The catalysed reaction is UMP + ATP = UDP + ADP. It participates in pyrimidine metabolism; CTP biosynthesis via de novo pathway; UDP from UMP (UMPK route): step 1/1. With respect to regulation, allosterically activated by GTP. Inhibited by UTP. Its function is as follows. Catalyzes the reversible phosphorylation of UMP to UDP. The sequence is that of Uridylate kinase from Thermotoga maritima (strain ATCC 43589 / DSM 3109 / JCM 10099 / NBRC 100826 / MSB8).